A 214-amino-acid chain; its full sequence is Imidazole glycerol phosphate synthase subunit HisH (214 aa).

Residues 3–211 enclose the Glutamine amidotransferase type-1 domain; that stretch reads IIAVIDYDMG…VEQVQATLAT (209 aa). The Nucleophile role is filled by Cys-81. Catalysis depends on residues His-186 and Glu-188.

As to quaternary structure, heterodimer of HisH and HisF.

It is found in the cytoplasm. The catalysed reaction is 5-[(5-phospho-1-deoxy-D-ribulos-1-ylimino)methylamino]-1-(5-phospho-beta-D-ribosyl)imidazole-4-carboxamide + L-glutamine = D-erythro-1-(imidazol-4-yl)glycerol 3-phosphate + 5-amino-1-(5-phospho-beta-D-ribosyl)imidazole-4-carboxamide + L-glutamate + H(+). It catalyses the reaction L-glutamine + H2O = L-glutamate + NH4(+). Its pathway is amino-acid biosynthesis; L-histidine biosynthesis; L-histidine from 5-phospho-alpha-D-ribose 1-diphosphate: step 5/9. In terms of biological role, IGPS catalyzes the conversion of PRFAR and glutamine to IGP, AICAR and glutamate. The HisH subunit catalyzes the hydrolysis of glutamine to glutamate and ammonia as part of the synthesis of IGP and AICAR. The resulting ammonia molecule is channeled to the active site of HisF. This chain is Imidazole glycerol phosphate synthase subunit HisH, found in Acaryochloris marina (strain MBIC 11017).